The chain runs to 485 residues: Glutamyl-tRNA(Gln) amidotransferase subunit A (485 aa).

Catalysis depends on charge relay system residues K78 and S153. S177 acts as the Acyl-ester intermediate in catalysis.

Belongs to the amidase family. GatA subfamily. In terms of assembly, heterotrimer of A, B and C subunits.

The catalysed reaction is L-glutamyl-tRNA(Gln) + L-glutamine + ATP + H2O = L-glutaminyl-tRNA(Gln) + L-glutamate + ADP + phosphate + H(+). Its function is as follows. Allows the formation of correctly charged Gln-tRNA(Gln) through the transamidation of misacylated Glu-tRNA(Gln) in organisms which lack glutaminyl-tRNA synthetase. The reaction takes place in the presence of glutamine and ATP through an activated gamma-phospho-Glu-tRNA(Gln). This is Glutamyl-tRNA(Gln) amidotransferase subunit A from Bacillus cereus (strain 03BB102).